The primary structure comprises 198 residues: MSVPRVGVLALQGDTREHLAALRECGAEPMTVRRRDELDAVDALVIPGGESTTMSHLLLDLDLLGPLRARLADGLPAYGSCAGMILLASEILDAGAAGRQALPLRAMNMTVRRNAFGSQVDSFEGDIEFAGLDDPVRAVFIRAPWVERVGDGVQVLARAAGHIVAVRQGAVLATAFHPEMTGDRRIHQLFVDIVTSAA.

49-51 (GES) contributes to the L-glutamine binding site. Cys81 functions as the Nucleophile in the catalytic mechanism. Residues Arg113 and 141–142 (IR) each bind L-glutamine. Active-site charge relay system residues include His177 and Glu179.

Belongs to the glutaminase PdxT/SNO family. In terms of assembly, in the presence of PdxS, forms a dodecamer of heterodimers. Only shows activity in the heterodimer.

The catalysed reaction is aldehydo-D-ribose 5-phosphate + D-glyceraldehyde 3-phosphate + L-glutamine = pyridoxal 5'-phosphate + L-glutamate + phosphate + 3 H2O + H(+). It catalyses the reaction L-glutamine + H2O = L-glutamate + NH4(+). Its pathway is cofactor biosynthesis; pyridoxal 5'-phosphate biosynthesis. Functionally, catalyzes the hydrolysis of glutamine to glutamate and ammonia as part of the biosynthesis of pyridoxal 5'-phosphate. The resulting ammonia molecule is channeled to the active site of PdxS. This Mycobacterium tuberculosis (strain ATCC 25177 / H37Ra) protein is Pyridoxal 5'-phosphate synthase subunit PdxT.